Reading from the N-terminus, the 201-residue chain is Endoribonuclease YbeY (201 aa).

The Zn(2+) site is built by His156, His160, and His166.

The protein belongs to the endoribonuclease YbeY family. Requires Zn(2+) as cofactor.

The protein resides in the cytoplasm. Functionally, single strand-specific metallo-endoribonuclease involved in late-stage 70S ribosome quality control and in maturation of the 3' terminus of the 16S rRNA. The sequence is that of Endoribonuclease YbeY from Cupriavidus pinatubonensis (strain JMP 134 / LMG 1197) (Cupriavidus necator (strain JMP 134)).